The primary structure comprises 25 residues: Ribosome-inactivating protein velutin (25 aa).

The tract at residues 1–25 is disordered; that stretch reads XHPDLFXXRPDNTASPKFEDPRLNP.

The protein belongs to the ribosome-inactivating protein family.

The enzyme catalyses Endohydrolysis of the N-glycosidic bond at one specific adenosine on the 28S rRNA.. Functionally, inhibits protein synthesis but does not possess ribonuclease activity. Also inhibits HIV-1 reverse transcriptase, beta-glucosidase and beta-glucuronidase. This Flammulina velutipes (Agaricus velutipes) protein is Ribosome-inactivating protein velutin.